A 436-amino-acid chain; its full sequence is Na(+)/H(+) antiporter NhaA (436 aa).

Transmembrane regions (helical) follow at residues 31-51 (VGGA…NSPG), 74-94 (LSLG…IAGL), 112-132 (IVPI…YTLI), 143-163 (GWAI…AVIS), 173-193 (FLLT…AVFY), 196-216 (NLQP…TWAV), 222-242 (SWYL…ESGV), 285-305 (VAVP…WAGF), 315-335 (IGII…ATFL), 350-370 (WIDV…SLLI), and 384-404 (HAKV…TVIL).

This sequence belongs to the NhaA Na(+)/H(+) (TC 2.A.33) antiporter family.

The protein localises to the cell membrane. It carries out the reaction Na(+)(in) + 2 H(+)(out) = Na(+)(out) + 2 H(+)(in). Functionally, na(+)/H(+) antiporter that extrudes sodium in exchange for external protons. This is Na(+)/H(+) antiporter NhaA from Renibacterium salmoninarum (strain ATCC 33209 / DSM 20767 / JCM 11484 / NBRC 15589 / NCIMB 2235).